The following is a 95-amino-acid chain: UPF0358 protein BT9727_3692 (95 aa).

Belongs to the UPF0358 family.

The chain is UPF0358 protein BT9727_3692 from Bacillus thuringiensis subsp. konkukian (strain 97-27).